Here is a 568-residue protein sequence, read N- to C-terminus: Potassium-transporting ATPase potassium-binding subunit (568 aa).

The next 10 helical transmembrane spans lie at 3 to 23 (TEILGVAVQIVLMVVLAYPLG), 64 to 84 (FLKALLILNAFWFVWGMVLLV), 133 to 153 (FVIMLFQFITAATGMAAMAGV), 179 to 199 (ILLPLSLVVGFILILQGTPMG), 255 to 275 (MVECWSILIIPMAMVLALGFY), 281 to 301 (LGYSIFGVMLFAYLAGVFINV), 375 to 395 (FGGVGVGWLNYYTFIIMAVFI), 418 to 438 (IATFVALLHPFVILVFTAISS), 497 to 517 (IVLILSRFIPIVGQVAIAGLL), and 535 to 555 (VTFAVMTFAVIFIVAALSFFP).

The protein belongs to the KdpA family. The system is composed of three essential subunits: KdpA, KdpB and KdpC.

The protein localises to the cell inner membrane. Its function is as follows. Part of the high-affinity ATP-driven potassium transport (or Kdp) system, which catalyzes the hydrolysis of ATP coupled with the electrogenic transport of potassium into the cytoplasm. This subunit binds the periplasmic potassium ions and delivers the ions to the membrane domain of KdpB through an intramembrane tunnel. This Bacteroides fragilis (strain ATCC 25285 / DSM 2151 / CCUG 4856 / JCM 11019 / LMG 10263 / NCTC 9343 / Onslow / VPI 2553 / EN-2) protein is Potassium-transporting ATPase potassium-binding subunit.